The chain runs to 339 residues: MVREEVAGSTQTLQWKCVESRVDSKRLYYGRFILSPLRKGQADTVGIALRRALLGEIEGTCITRAKFGSVPHEYSTIAGIEESVQEILLNLKEIVLRSNLYGVRDASICVKGPRYITAQDIILPPSVEIVDTAQPIANLTEPIDFCIDLQIKRDRGYQTELRKNYQDGSYPIDAVSMPVRNVNYSIFSCGNGNEKHEILFLEIWTNGSLTPKEALYEASRNLIDLFLPFLHAEEEGTSFEENKNRFTPPLFTFQKRLTNLKKNKKGIPLNSIFIDQLELTSRTYNCLKRANIHTLLDLLSKTEEDLLRIDSFRMEDRKHIWDTLEKHLPIDLLKNKLSF.

The alpha N-terminal domain (alpha-NTD) stretch occupies residues 1-233; sequence MVREEVAGST…DLFLPFLHAE (233 aa). Residues 264-339 are alpha C-terminal domain (alpha-CTD); it reads KKGIPLNSIF…IDLLKNKLSF (76 aa).

This sequence belongs to the RNA polymerase alpha chain family. In plastids the minimal PEP RNA polymerase catalytic core is composed of four subunits: alpha, beta, beta', and beta''. When a (nuclear-encoded) sigma factor is associated with the core the holoenzyme is formed, which can initiate transcription.

It is found in the plastid. The protein localises to the chloroplast. It catalyses the reaction RNA(n) + a ribonucleoside 5'-triphosphate = RNA(n+1) + diphosphate. Functionally, DNA-dependent RNA polymerase catalyzes the transcription of DNA into RNA using the four ribonucleoside triphosphates as substrates. The chain is DNA-directed RNA polymerase subunit alpha from Aegilops tauschii (Tausch's goatgrass).